A 121-amino-acid polypeptide reads, in one-letter code: Large ribosomal subunit protein uL14 (121 aa).

The protein belongs to the universal ribosomal protein uL14 family. In terms of assembly, part of the 50S ribosomal subunit. Forms a cluster with proteins L3 and L19. In the 70S ribosome, L14 and L19 interact and together make contacts with the 16S rRNA in bridges B5 and B8.

Functionally, binds to 23S rRNA. Forms part of two intersubunit bridges in the 70S ribosome. This Prochlorococcus marinus (strain MIT 9515) protein is Large ribosomal subunit protein uL14.